We begin with the raw amino-acid sequence, 365 residues long: 4-hydroxy-3-methylbut-2-en-1-yl diphosphate synthase (flavodoxin) (365 aa).

Cys270, Cys273, Cys305, and Glu312 together coordinate [4Fe-4S] cluster.

The protein belongs to the IspG family. The cofactor is [4Fe-4S] cluster.

It carries out the reaction (2E)-4-hydroxy-3-methylbut-2-enyl diphosphate + 2 oxidized [2Fe-2S]-[ferredoxin] + H2O = 2-C-methyl-D-erythritol 2,4-cyclic diphosphate + 2 reduced [2Fe-2S]-[ferredoxin] + H(+). The catalysed reaction is (2E)-4-hydroxy-3-methylbut-2-enyl diphosphate + oxidized [flavodoxin] + H2O + 2 H(+) = 2-C-methyl-D-erythritol 2,4-cyclic diphosphate + reduced [flavodoxin]. Its pathway is isoprenoid biosynthesis; isopentenyl diphosphate biosynthesis via DXP pathway; isopentenyl diphosphate from 1-deoxy-D-xylulose 5-phosphate: step 5/6. Converts 2C-methyl-D-erythritol 2,4-cyclodiphosphate (ME-2,4cPP) into 1-hydroxy-2-methyl-2-(E)-butenyl 4-diphosphate. Involved in density-dependent regulation of 2'-N-acetyltransferase. The polypeptide is 4-hydroxy-3-methylbut-2-en-1-yl diphosphate synthase (flavodoxin) (Providencia stuartii).